The sequence spans 96 residues: Cytochrome c oxidase assembly factor 3 homolog, mitochondrial (96 aa).

Over 1-50 the chain is Mitochondrial matrix; sequence MSSQGEPKPEAQFAKRIDPTKEALTKEQLQFIRQVEMAQWKKKTDKLRGR. Residues 51–73 form a helical membrane-spanning segment; the sequence is NVATGLAIGAVVLGIYGYTFYSV. Topologically, residues 74–96 are mitochondrial intermembrane; that stretch reads SQEKIMDEIDEEAKVRVPKTGAN.

This sequence belongs to the COA3 family. Core component of the MITRAC (mitochondrial translation regulation assembly intermediate of cytochrome c oxidase complex) complex.

The protein localises to the mitochondrion inner membrane. Core component of the MITRAC (mitochondrial translation regulation assembly intermediate of cytochrome c oxidase complex) complex, that regulates cytochrome c oxidase assembly. MITRAC complexes regulate both translation of mitochondrial encoded components and assembly of nuclear-encoded components imported in mitochondrion. Required for efficient translation of MT-CO1 and mitochondrial respiratory chain complex IV assembly. This chain is Cytochrome c oxidase assembly factor 3 homolog, mitochondrial (coa3a), found in Danio rerio (Zebrafish).